A 227-amino-acid polypeptide reads, in one-letter code: Thiamine-phosphate synthase (227 aa).

4-amino-2-methyl-5-(diphosphooxymethyl)pyrimidine-binding positions include 50–54 (QFRQK) and Asp-82. Residues Asp-83 and Asp-102 each coordinate Mg(2+). 4-amino-2-methyl-5-(diphosphooxymethyl)pyrimidine is bound at residue Thr-121. Position 147 to 149 (147 to 149 (TTS)) interacts with 2-[(2R,5Z)-2-carboxy-4-methylthiazol-5(2H)-ylidene]ethyl phosphate. Lys-150 is a binding site for 4-amino-2-methyl-5-(diphosphooxymethyl)pyrimidine. Residues Gly-178 and 198–199 (LS) each bind 2-[(2R,5Z)-2-carboxy-4-methylthiazol-5(2H)-ylidene]ethyl phosphate.

It belongs to the thiamine-phosphate synthase family. The cofactor is Mg(2+).

It catalyses the reaction 2-[(2R,5Z)-2-carboxy-4-methylthiazol-5(2H)-ylidene]ethyl phosphate + 4-amino-2-methyl-5-(diphosphooxymethyl)pyrimidine + 2 H(+) = thiamine phosphate + CO2 + diphosphate. The catalysed reaction is 2-(2-carboxy-4-methylthiazol-5-yl)ethyl phosphate + 4-amino-2-methyl-5-(diphosphooxymethyl)pyrimidine + 2 H(+) = thiamine phosphate + CO2 + diphosphate. The enzyme catalyses 4-methyl-5-(2-phosphooxyethyl)-thiazole + 4-amino-2-methyl-5-(diphosphooxymethyl)pyrimidine + H(+) = thiamine phosphate + diphosphate. It functions in the pathway cofactor biosynthesis; thiamine diphosphate biosynthesis; thiamine phosphate from 4-amino-2-methyl-5-diphosphomethylpyrimidine and 4-methyl-5-(2-phosphoethyl)-thiazole: step 1/1. Its function is as follows. Condenses 4-methyl-5-(beta-hydroxyethyl)thiazole monophosphate (THZ-P) and 2-methyl-4-amino-5-hydroxymethyl pyrimidine pyrophosphate (HMP-PP) to form thiamine monophosphate (TMP). This Salinibacter ruber (strain DSM 13855 / M31) protein is Thiamine-phosphate synthase.